The primary structure comprises 93 residues: uncharacterized protein (93 aa).

3 helical membrane passes run 9–29, 40–60, and 66–86; these read ITVI…PQLI, ISLA…IYGI, and PIIV…YLKI.

It localises to the cell membrane. This is an uncharacterized protein from Methanocaldococcus jannaschii (strain ATCC 43067 / DSM 2661 / JAL-1 / JCM 10045 / NBRC 100440) (Methanococcus jannaschii).